The sequence spans 429 residues: Serum response factor-binding protein 1 (429 aa).

Alanine 2 carries the N-acetylalanine modification. Coiled coils occupy residues 42 to 67 and 108 to 146; these read KGTE…AMKE and LLKK…NHSE. Disordered stretches follow at residues 131-157 and 176-429; these read AEVE…NGSN and LAKK…TFDD. Polar residues predominate over residues 146-157; that stretch reads ENTLYSNDNGSN. Basic and acidic residues predominate over residues 183 to 195; it reads NSKEKIAKMEHGP. Lysine 190 participates in a covalent cross-link: Glycyl lysine isopeptide (Lys-Gly) (interchain with G-Cter in SUMO2). Residues serine 203, serine 205, serine 264, serine 279, and serine 281 each carry the phosphoserine modification. The segment covering 249–265 has biased composition (acidic residues); it reads GGEEFCEEEKEYFDDST. Basic and acidic residues predominate over residues 296–341; the sequence is KESSCHSSVKEQKPLEKVFLKEDTGETHGDTRNDKIKPSTETRKLE. Residue lysine 316 forms a Glycyl lysine isopeptide (Lys-Gly) (interchain with G-Cter in SUMO2) linkage. Phosphoserine is present on residues serine 349, serine 351, and serine 367. A compositionally biased stretch (basic and acidic residues) spans 357 to 367; it reads NFKEQAPKTRS. Residues 373–383 are compositionally biased toward polar residues; sequence NEPQIKNQFNK.

As to quaternary structure, interacts with SRF. Forms complexes with SRF and SRF cofactors ARID2, MYOCD and NKX2-5. Interacts with the N-terminus of SLC2A4. Abundantly expressed in heart and skeletal muscle, and at much lower levels in brain and lung.

The protein localises to the cytoplasm. The protein resides in the perinuclear region. In terms of biological role, may be involved in regulating transcriptional activation of cardiac genes during the aging process. May play a role in biosynthesis and/or processing of SLC2A4 in adipose cells. The chain is Serum response factor-binding protein 1 from Homo sapiens (Human).